The chain runs to 193 residues: MHVGVLGGTFDPPHNGHLALALFARELLCVDRLILSVSDNPLKQRRSASDSQRKAMTELLCHEINRTGTFCDACGWELEQKRPSYTVNLLRFVRSLYPSARLSLLVGEDSWRNFGSWKSPEEIEELADVVVFARGAEHMTERPDAVSGIRFVEFSCPLSSTMLRGRIAEGQSVSSLLPSSIDRYIRREGLYGE.

The protein belongs to the NadD family.

It catalyses the reaction nicotinate beta-D-ribonucleotide + ATP + H(+) = deamido-NAD(+) + diphosphate. It functions in the pathway cofactor biosynthesis; NAD(+) biosynthesis; deamido-NAD(+) from nicotinate D-ribonucleotide: step 1/1. Catalyzes the reversible adenylation of nicotinate mononucleotide (NaMN) to nicotinic acid adenine dinucleotide (NaAD). The polypeptide is Probable nicotinate-nucleotide adenylyltransferase (Chlorobium phaeovibrioides (strain DSM 265 / 1930) (Prosthecochloris vibrioformis (strain DSM 265))).